The chain runs to 156 residues: MPRKGQVERRDVMADPIYNSKLVTRLINRLMLDGKKGTAQQILYKAFEAIAERSGRDAMEVFEEAMNNIMPVLEVKARRVGGANYQVPVEVRPERRTTLALRYLVNYSRLRNEKTMDARLANEIMDAANNTGASVKKREDMHKMAEANKAFAHYRW.

Belongs to the universal ribosomal protein uS7 family. Part of the 30S ribosomal subunit. Contacts proteins S9 and S11.

Its function is as follows. One of the primary rRNA binding proteins, it binds directly to 16S rRNA where it nucleates assembly of the head domain of the 30S subunit. Is located at the subunit interface close to the decoding center, probably blocks exit of the E-site tRNA. The polypeptide is Small ribosomal subunit protein uS7 (Exiguobacterium sibiricum (strain DSM 17290 / CCUG 55495 / CIP 109462 / JCM 13490 / 255-15)).